An 875-amino-acid polypeptide reads, in one-letter code: Phosphatidylethanolamine N-methyltransferase (875 aa).

The Lumenal portion of the chain corresponds to 1-42 (MKETKVQNTIAGAKGITFSGDTFVVPETHDMVKTLFDPMVRK). A helical membrane pass occupies residues 43–63 (SYCEMIILLILAANGLVFWLI). Topologically, residues 64 to 71 (NNNTLRIE) are cytoplasmic. The helical transmembrane segment at 72–92 (TFIGLYIFWRLSYNFGIGYLL) threads the bilayer. Topologically, residues 93–152 (NVQSNHHRLVKWARKAQVFKKNGSLVSRLAEKEIKSQMGPEYDVQKYPIEFNTWLLFRKV) are lumenal. The helical transmembrane segment at 153 to 173 (VDLILMSDFTTFICLVVVCAI) threads the bilayer. At 174–186 (NKDYQFINSDQQE) the chain is on the cytoplasmic side. Residues 187-207 (VWLISTRLILGTVLILFNLWV) form a helical membrane-spanning segment. Over 208-242 (KVNAHNTIKDYAWYWGDFFFRQINNEDLIFDGVFE) the chain is Lumenal. Residues 243-263 (MVPHPMYSVGYVGYYGFAIIS) form a helical membrane-spanning segment. Residues 264 to 265 (KS) lie on the Cytoplasmic side of the membrane. Residues 266–286 (YTILTVAIFGHFLQMIFLHYI) form a helical membrane-spanning segment. At 287 to 338 (ENPHIDKIYGPSGNEADIEMLLKLKDLRHFDNIKPLVGLLNFTWLRASDMTN) the chain is on the lumenal side. Residues 339–359 (LIMVGTYSFTIPYLASLVDTV) form a helical membrane-spanning segment. Residues 360–370 (RVGETGVNPGT) lie on the Cytoplasmic side of the membrane. The chain crosses the membrane as a helical span at residues 371–391 (ILFILTIVIKVFESLSINILL). At 392-424 (ILQSYYKTFTKWYLSNDISVEKTLNNWSIMYNS) the chain is on the lumenal side. A helical membrane pass occupies residues 425 to 445 (LISLTYSSFFGLNFYHVLIGL). Over 446-459 (ESDKLFINSWVYLR) the chain is Cytoplasmic. A helical membrane pass occupies residues 460–480 (IFLGILLVFTQVWINSSIIDS). The Lumenal portion of the chain corresponds to 481–517 (IGYFGWFYGDFFIPKTSQQKAHLTKAGVYRYLNNPEQ). Residues 518-538 (IFGVCGIMGVTLIIPSLENLI) traverse the membrane as a helical segment. The Cytoplasmic segment spans residues 539-875 (CCVLWVTNNF…YPLSEEKKEE (337 aa)).

The protein belongs to the class VI-like SAM-binding methyltransferase superfamily. CHO2 family.

It is found in the endoplasmic reticulum membrane. The catalysed reaction is a 1,2-diacyl-sn-glycero-3-phosphoethanolamine + S-adenosyl-L-methionine = a 1,2-diacyl-sn-glycero-3-phospho-N-methylethanolamine + S-adenosyl-L-homocysteine + H(+). The protein operates within phospholipid metabolism; phosphatidylcholine biosynthesis. Catalyzes the first step of the methylation pathway of phosphatidylcholine biosynthesis, the SAM-dependent methylation of phosphatidylethanolamine (PE) to phosphatidylmonomethylethanolamine (PMME). In Debaryomyces hansenii (strain ATCC 36239 / CBS 767 / BCRC 21394 / JCM 1990 / NBRC 0083 / IGC 2968) (Yeast), this protein is Phosphatidylethanolamine N-methyltransferase (CHO2).